A 469-amino-acid chain; its full sequence is Glutamate--tRNA ligase 2 (469 aa).

Residues 11-21 (PSPTGHLHLGG) carry the 'HIGH' region motif. Positions 238 to 242 (KLSKR) match the 'KMSKS' region motif. ATP is bound at residue lysine 241.

The protein belongs to the class-I aminoacyl-tRNA synthetase family. Glutamate--tRNA ligase type 1 subfamily. As to quaternary structure, monomer.

It localises to the cytoplasm. It catalyses the reaction tRNA(Glu) + L-glutamate + ATP = L-glutamyl-tRNA(Glu) + AMP + diphosphate. Catalyzes the attachment of glutamate to tRNA(Glu) in a two-step reaction: glutamate is first activated by ATP to form Glu-AMP and then transferred to the acceptor end of tRNA(Glu). The protein is Glutamate--tRNA ligase 2 of Ehrlichia chaffeensis (strain ATCC CRL-10679 / Arkansas).